The sequence spans 221 residues: Cytidylate kinase (221 aa).

ATP is bound at residue 7–15 (GPSASGKSS).

The protein belongs to the cytidylate kinase family. Type 1 subfamily.

It is found in the cytoplasm. It catalyses the reaction CMP + ATP = CDP + ADP. It carries out the reaction dCMP + ATP = dCDP + ADP. The polypeptide is Cytidylate kinase (Borreliella burgdorferi (strain ZS7) (Borrelia burgdorferi)).